The primary structure comprises 475 residues: SAM50-like protein SPAC17C9.06 (475 aa).

In terms of domain architecture, POTRA spans Val-44 to Lys-130.

This sequence belongs to the SAM50/omp85 family. Associates with the mitochondrial contact site and cristae organizing system (MICOS) complex (also known as MINOS or MitOS complex).

It is found in the mitochondrion outer membrane. May be required for the assembly pathway of mitochondrial outer membrane proteins. This is SAM50-like protein SPAC17C9.06 from Schizosaccharomyces pombe (strain 972 / ATCC 24843) (Fission yeast).